The primary structure comprises 146 residues: Ribosomal RNA large subunit methyltransferase H (146 aa).

S-adenosyl-L-methionine-binding positions include Leu68, Gly95, and 114-119 (LSSLTF).

It belongs to the RNA methyltransferase RlmH family. Homodimer.

It is found in the cytoplasm. It catalyses the reaction pseudouridine(1915) in 23S rRNA + S-adenosyl-L-methionine = N(3)-methylpseudouridine(1915) in 23S rRNA + S-adenosyl-L-homocysteine + H(+). In terms of biological role, specifically methylates the pseudouridine at position 1915 (m3Psi1915) in 23S rRNA. The chain is Ribosomal RNA large subunit methyltransferase H from Thermodesulfovibrio yellowstonii (strain ATCC 51303 / DSM 11347 / YP87).